Consider the following 202-residue polypeptide: Putative scarecrow-like protein 16 (202 aa).

The VHIID stretch occupies residues 1–26; the sequence is MQIPTLIDSMANKLHKKPPPLLKLTV. The GRAS domain maps to 1–202; the sequence is MQIPTLIDSM…RVERLEPKSR (202 aa). The segment at 45–82 is leucine repeat II (LRII); the sequence is ELGSKLVNFATTRNVAMEFRIISSSYSDGLSSLIEQLR. Positions 92-184 are PFYRE; that stretch reads LVVNCHMMLH…EADISWKIDN (93 aa). The tract at residues 187–202 is SAW; it reads AKEGAERVERLEPKSR.

It belongs to the GRAS family. As to expression, expressed in seedlings, leaves and flowers.

It localises to the nucleus. Probable transcription factor involved in plant development. The protein is Putative scarecrow-like protein 16 (SCL16) of Arabidopsis thaliana (Mouse-ear cress).